Reading from the N-terminus, the 66-residue chain is DNA gyrase inhibitor YacG (66 aa).

Positions 9, 12, 28, and 32 each coordinate Zn(2+). The interval 45–66 (HKIAGSEESEDELYSGDLEPRH) is disordered.

This sequence belongs to the DNA gyrase inhibitor YacG family. In terms of assembly, interacts with GyrB. The cofactor is Zn(2+).

In terms of biological role, inhibits all the catalytic activities of DNA gyrase by preventing its interaction with DNA. Acts by binding directly to the C-terminal domain of GyrB, which probably disrupts DNA binding by the gyrase. This Pseudomonas putida (strain ATCC 47054 / DSM 6125 / CFBP 8728 / NCIMB 11950 / KT2440) protein is DNA gyrase inhibitor YacG.